A 76-amino-acid chain; its full sequence is Alpha/kappa-conotoxin-like pl14.1 (76 aa).

The first 27 residues, 1–27 (MPSVRSVTCCCLLWMMLSVQLVTPGSP), serve as a signal peptide directing secretion. The propeptide occupies 28–39 (ATAQLSGQRTAR). 2 cysteine pairs are disulfide-bonded: Cys46–Cys61 and Cys50–Cys63. An Asparagine amide modification is found at Asn64. The propeptide occupies 65–76 (GKRDVVSSSMAV).

Belongs to the conotoxin J superfamily. Expressed by the venom duct.

It is found in the secreted. Its function is as follows. Highly inhibits both nicotinic acetylcholine receptors (neuronal (alpha-3/beta-4) and muscular (alpha-1/beta-1/epsilon/delta) subtypes) and the voltage-gated potassium channel Kv1.6/KCNA6 subtype. This Conus planorbis (Planorbis cone) protein is Alpha/kappa-conotoxin-like pl14.1.